The sequence spans 575 residues: Transcription factor COE2 (575 aa).

Positions 62–65 (RKSN) are interaction with DNA. The C5-type zinc finger occupies 150–169 (CRVLLTHEVMCSRCCEKKSC). 2 interaction with DNA regions span residues 196-203 (NCLKTAGN) and 235-238 (NNSK). The IPT/TIG domain maps to 253–336 (PCIKAISPSE…KGAPGRFIYT (84 aa)). Polar residues predominate over residues 441-453 (STQGNNQGYIRNT). A disordered region spans residues 441–479 (STQGNNQGYIRNTSSISPRGYSSSSTPQQSNYSTSSNSM). The segment covering 454–479 (SSISPRGYSSSSTPQQSNYSTSSNSM) has biased composition (low complexity).

It belongs to the COE family. Forms either a homodimer or a heterodimer with a related family member. Interacts with SIX1.

The protein localises to the nucleus. Transcription factor that, in osteoblasts, activates the decoy receptor for RANKL, TNFRSF11B, which in turn regulates osteoclast differentiation. Acts in synergy with the Wnt-responsive LEF1/CTNNB1 pathway. Recognizes variations of the palindromic sequence 5'-ATTCCCNNGGGAATT-3'. The polypeptide is Transcription factor COE2 (EBF2) (Homo sapiens (Human)).